The following is a 196-amino-acid chain: Probable thymidylate kinase (196 aa).

8-15 (GIDASGKT) provides a ligand contact to ATP.

It belongs to the thymidylate kinase family.

It catalyses the reaction dTMP + ATP = dTDP + ADP. The sequence is that of Probable thymidylate kinase from Metallosphaera sedula (strain ATCC 51363 / DSM 5348 / JCM 9185 / NBRC 15509 / TH2).